The following is a 403-amino-acid chain: Queuine tRNA-ribosyltransferase catalytic subunit 1 (403 aa).

Alanine 2 is subject to N-acetylalanine. The Proton acceptor role is filled by aspartate 105. Residue 105-109 (DSGGF) coordinates queuine. Phosphoserine is present on serine 139. Aspartate 159, glutamine 202, and glycine 229 together coordinate queuine. The tract at residues 260–266 (GVGYATD) is RNA binding. Aspartate 279 acts as the Nucleophile in catalysis. The RNA binding; important for wobble base 34 recognition stretch occupies residues 284–288 (TRTAR). Cysteine 317, cysteine 319, cysteine 322, and histidine 348 together coordinate Zn(2+).

It belongs to the queuine tRNA-ribosyltransferase family. As to quaternary structure, heterodimer of a catalytic subunit QTRT1 and an accessory subunit QTRT2. Requires Zn(2+) as cofactor. In terms of tissue distribution, expressed in brain, heart, kidney, liver, ling, skeletal muscle, spleen and testis.

The protein localises to the cytoplasm. It localises to the mitochondrion outer membrane. It is found in the nucleus. The catalysed reaction is guanosine(34) in tRNA + queuine = queuosine(34) in tRNA + guanine. Its function is as follows. Catalytic subunit of the queuine tRNA-ribosyltransferase (TGT) that catalyzes the base-exchange of a guanine (G) residue with queuine (Q) at position 34 (anticodon wobble position) in tRNAs with GU(N) anticodons (tRNA-Asp, -Asn, -His and -Tyr), resulting in the hypermodified nucleoside queuosine (7-(((4,5-cis-dihydroxy-2-cyclopenten-1-yl)amino)methyl)-7-deazaguanosine). Catalysis occurs through a double-displacement mechanism. The nucleophile active site attacks the C1' of nucleotide 34 to detach the guanine base from the RNA, forming a covalent enzyme-RNA intermediate. The proton acceptor active site deprotonates the incoming queuine, allowing a nucleophilic attack on the C1' of the ribose to form the product. Modification of cytoplasmic tRNAs with queuosine controls the elongation speed of cognate codons, thereby ensuring the correct folding of nascent proteins to maintain proteome integrity. This is Queuine tRNA-ribosyltransferase catalytic subunit 1 from Mus musculus (Mouse).